Here is a 443-residue protein sequence, read N- to C-terminus: tRNA modification GTPase MnmE (443 aa).

(6S)-5-formyl-5,6,7,8-tetrahydrofolate contacts are provided by arginine 23, glutamate 82, and lysine 121. One can recognise a TrmE-type G domain in the interval 215-364; that stretch reads GTSIVLAGHP…LKQFIQKWMQ (150 aa). Position 225 (asparagine 225) interacts with K(+). Residues 225-230, 244-250, and 269-272 contribute to the GTP site; these read NVGKSS, TDIPGTT, and DSAG. Serine 229 contributes to the Mg(2+) binding site. K(+)-binding residues include threonine 244, isoleucine 246, and threonine 249. Threonine 250 contacts Mg(2+). Lysine 443 provides a ligand contact to (6S)-5-formyl-5,6,7,8-tetrahydrofolate.

This sequence belongs to the TRAFAC class TrmE-Era-EngA-EngB-Septin-like GTPase superfamily. TrmE GTPase family. As to quaternary structure, homodimer. Heterotetramer of two MnmE and two MnmG subunits. K(+) serves as cofactor.

It is found in the cytoplasm. Exhibits a very high intrinsic GTPase hydrolysis rate. Involved in the addition of a carboxymethylaminomethyl (cmnm) group at the wobble position (U34) of certain tRNAs, forming tRNA-cmnm(5)s(2)U34. The protein is tRNA modification GTPase MnmE of Chlamydia caviae (strain ATCC VR-813 / DSM 19441 / 03DC25 / GPIC) (Chlamydophila caviae).